Reading from the N-terminus, the 143-residue chain is MFMGEYQHTIDAKGRMIVPAKFREGLGEQFVLTRGLDQCLFGYPMHEWKQIEEKLKALPLTKKDARAFTRFFFSGATECELDKQGRVNIASSLLNYAKLEKECVVIGVSNRIELWSKVIWEQYTEEQEDSFAEIAENMIGFDI.

2 SpoVT-AbrB domains span residues 5 to 47 and 76 to 119; these read EYQH…PMHE and ATEC…SKVI.

Belongs to the MraZ family. As to quaternary structure, forms oligomers.

The protein localises to the cytoplasm. It is found in the nucleoid. The chain is Transcriptional regulator MraZ from Bacillus subtilis (strain 168).